A 416-amino-acid chain; its full sequence is 1-deoxy-D-xylulose 5-phosphate reductoisomerase (416 aa).

NADPH is bound by residues Thr-10, Gly-11, Ser-12, Ile-13, Gly-36, Arg-37, Asn-38, and Asn-130. Lys-131 contributes to the 1-deoxy-D-xylulose 5-phosphate binding site. Residue Glu-132 participates in NADPH binding. Asp-156 is a binding site for Mn(2+). 1-deoxy-D-xylulose 5-phosphate contacts are provided by Ser-157, Glu-158, Ser-194, and His-217. Residue Glu-158 coordinates Mn(2+). Gly-223 serves as a coordination point for NADPH. Ser-230, Asn-235, Lys-236, and Glu-239 together coordinate 1-deoxy-D-xylulose 5-phosphate. Residue Glu-239 participates in Mn(2+) binding.

The protein belongs to the DXR family. Mg(2+) is required as a cofactor. Requires Mn(2+) as cofactor.

The catalysed reaction is 2-C-methyl-D-erythritol 4-phosphate + NADP(+) = 1-deoxy-D-xylulose 5-phosphate + NADPH + H(+). It participates in isoprenoid biosynthesis; isopentenyl diphosphate biosynthesis via DXP pathway; isopentenyl diphosphate from 1-deoxy-D-xylulose 5-phosphate: step 1/6. In terms of biological role, catalyzes the NADPH-dependent rearrangement and reduction of 1-deoxy-D-xylulose-5-phosphate (DXP) to 2-C-methyl-D-erythritol 4-phosphate (MEP). This chain is 1-deoxy-D-xylulose 5-phosphate reductoisomerase, found in Synechococcus sp. (strain CC9311).